Consider the following 201-residue polypeptide: MLAFTLRFIKNKRYFAILAGALVIIAGLASQHAWSGNGLPQINGKALAALAKQHPVVVLFRHAERCDRSDNTCLSDSTGITVNGAQDARALGKAFSADIQNYNLYSSNTVRTIQSATWFSAGRSLTADKKMMDCGSGIYASINTLLKKSQNKNIVIFTHNHCLTYIAKNKRGVKFDPDYLNALVMYAENGKLFLDGEFVPG.

Residues 1-33 (MLAFTLRFIKNKRYFAILAGALVIIAGLASQHA) form the signal peptide.

Belongs to the phosphoglycerate mutase family. Ais subfamily.

Its subcellular location is the periplasm. It functions in the pathway bacterial outer membrane biogenesis; lipopolysaccharide metabolism. Catalyzes the dephosphorylation of heptose(II) of the outer membrane lipopolysaccharide core. This Salmonella typhi protein is Lipopolysaccharide core heptose(II)-phosphate phosphatase.